A 1270-amino-acid polypeptide reads, in one-letter code: MTDDNSDDKIEDELQTFFTSDKDGNTHAYNPKSPPTQKSSASSVNWNSANPDDMVVDYETDPAVVTGENISLSLQGVEVFDHEKSSSDFTSKQVLDMHKDSICQSPALVGTEKPKYLQHSCHSLEAVEVQSVEPSLPFVWKPNDNLNCTGYSDALELNQTFDMTVDKVNCTFISHHAIRKSQSFHTAGSLPPTGRRSGNTSSLSYSTWTSSHSDKMHARETTYDRESFENPQVTPSEAQDTTYTAFSDVVMQSEVFVSDIGNQCPCSSGKVTSEYTDGSQQRLVGEKETQALTPVSDGMEVPNDSALQEFFCLSHDESNSEPHSQSSYRHKEMGQNLRETVSYCLVDDERPLMVPAFDKSEAQVLNPEHKVTETEDTQMVTKGKDSGTQNHTSELILSSPPGQKVGSSFGLTWDANDMVISTDNTMCMSTPVLEPTKVTFSVSPIEATEKCKKVEKGNRGLKNISNSKEAPVNLCKPSLGKSTTKTNTPIGCKVRKTEIISYPRPNFRNVKAKVMSRPVLQSKDAALSKVTPRPQLTSASSPSSAISRQPTVLSRTPRSDLNADKKAEILINKTHKQQFNKLITSQAVHVTTHSKNASHRVPRTTSAVKSNQEDVDKASSSNSACETGSVSALFQKIKGILPVKMESAECLEMTYVPNIDRISPEKKGEKENGTSMEKQELKQEIMNETFEYGSLFLGSASKTTTTSGRNISKPDSCGLRQIAAPKAKVGPPVSCLRRNSDNRNPSADRAVSPQRIRRVSSSGKPTSLKTAQSSWVNLPRPLPKSKASLKSPALRRTGSTPSIASTHSELSTYSNNSGNATVIKYEEKPPKPAFQNGSSGSFYLKPLVSRAHVHLLKTPPKGPSRKNLFTALNAVEKSRQKNPRSLCIQTQTAPDVLPPEKTLELTQYKTKCENQSGFILQLKQLLACGNTKSEALTVVIQHLLSEREEALKQHKTLSQELVNLRGELVTASTTCEKLEEARNELQTAYEAFVQQHQAEKTERENRLKEFYTREYEKLRDTYIEEAEKYKMQLQEQFDNLNAAHETSKLEIEASHSEKVELLKKAYEASLSEIKKGHEMEKKSLEDLLSEKQESLEKQISDLKSENDALNEKLKSEEQKRRAREKANLKNPQIMYLEQELESLKAVLEIKNEKLHQQDIKLMKMEKLVDNNTALVDKLKRFQQENEELKARMDKHMAISRQLSTEQAVLQESLEKESKVNKRLSMENEELLWKLHNGDLCSPKRSPTSSAIPFQSPRNSGSFPSPSISPR.

The span at methionine 1–leucine 14 shows a compositional bias: acidic residues. Disordered stretches follow at residues methionine 1 to asparagine 50, serine 183 to histidine 217, and threonine 374 to glycine 402. Positions serine 39 to asparagine 50 are enriched in low complexity. Threonine 186 is subject to Phosphothreonine. Residues threonine 200–serine 211 show a composition bias toward low complexity. Residues serine 386, serine 399, and serine 443 each carry the phosphoserine modification. Residues serine 386 to isoleucine 396 are compositionally biased toward polar residues. Disordered stretches follow at residues aspartate 524–arginine 558 and threonine 592–asparagine 622. Low complexity predominate over residues serine 538 to serine 547. The residue at position 629 (serine 629) is a Phosphoserine. Polar residues-rich tracts occupy residues serine 701–asparagine 710, valine 759–valine 776, and threonine 797–asparagine 816. The interval serine 701–asparagine 816 is disordered. A coiled-coil region spans residues isoleucine 940–leucine 1231. Residues serine 1203, serine 1224, serine 1245, serine 1255, serine 1259, serine 1261, serine 1264, and serine 1268 each carry the phosphoserine modification. Residues glycine 1237–arginine 1270 are disordered. The span at arginine 1244–arginine 1270 shows a compositional bias: polar residues.

This sequence belongs to the MTUS1 family. Homodimer. Interacts with AGTR2. Interacts with PTPN6. Associates with microtubules.

The protein resides in the mitochondrion. Its subcellular location is the golgi apparatus. It is found in the cell membrane. It localises to the nucleus. Cooperates with AGTR2 to inhibit ERK2 activation and cell proliferation. May be required for AGTR2 cell surface expression. Together with PTPN6, induces UBE2V2 expression upon angiotensin-II stimulation. The protein is Microtubule-associated tumor suppressor 1 homolog (MTUS1) of Pongo abelii (Sumatran orangutan).